We begin with the raw amino-acid sequence, 243 residues long: 1-(5-phosphoribosyl)-5-[(5-phosphoribosylamino)methylideneamino] imidazole-4-carboxamide isomerase (243 aa).

Aspartate 17 functions as the Proton acceptor in the catalytic mechanism. Catalysis depends on aspartate 138, which acts as the Proton donor.

It belongs to the HisA/HisF family.

It is found in the cytoplasm. It catalyses the reaction 1-(5-phospho-beta-D-ribosyl)-5-[(5-phospho-beta-D-ribosylamino)methylideneamino]imidazole-4-carboxamide = 5-[(5-phospho-1-deoxy-D-ribulos-1-ylimino)methylamino]-1-(5-phospho-beta-D-ribosyl)imidazole-4-carboxamide. Its pathway is amino-acid biosynthesis; L-histidine biosynthesis; L-histidine from 5-phospho-alpha-D-ribose 1-diphosphate: step 4/9. The chain is 1-(5-phosphoribosyl)-5-[(5-phosphoribosylamino)methylideneamino] imidazole-4-carboxamide isomerase from Deinococcus geothermalis (strain DSM 11300 / CIP 105573 / AG-3a).